A 507-amino-acid polypeptide reads, in one-letter code: Nuclear poly(A) polymerase 3 (507 aa).

Residues 79–81, 91–94, Asp-147, Lys-208, Tyr-217, and 226–227 each bind ATP; these read YGS, SDID, and GV. Positions 92, 94, and 147 each coordinate Mg(2+).

It belongs to the poly(A) polymerase family. Monomer. Forms a complex with cleavage and polyadenylation specificity factor (CPSF) subunits FIPS5 and CPSF30. Mg(2+) is required as a cofactor. Requires Mn(2+) as cofactor. Expressed in leaves (mostly in petioles and tips), cotyledon, roots (tips, vascular tissue of the radicle, and throughout the root tissue excluding the elongation zone), stems, and flowers (restricted to the stigma and the pollen in mature anthers). Active in the primary and secondary root systems.

It localises to the nucleus. It carries out the reaction RNA(n) + ATP = RNA(n)-3'-adenine ribonucleotide + diphosphate. Its function is as follows. Essential protein. Polymerase that creates the 3'-poly(A) tail of mRNA's. Also required for the endoribonucleolytic cleavage reaction at some polyadenylation sites. May acquire specificity through interaction with a cleavage and polyadenylation specificity factor (CPSF) at its C-terminus. The sequence is that of Nuclear poly(A) polymerase 3 from Arabidopsis thaliana (Mouse-ear cress).